The sequence spans 147 residues: Large ribosomal subunit protein uL15 (147 aa).

The tract at residues 1–45 (MTIKLHHLRPAPGAKSDKIRVGRGEGGKRGKTAGRGTKGTKARKN) is disordered. Residues 15 to 28 (KSDKIRVGRGEGGK) are compositionally biased toward basic and acidic residues.

This sequence belongs to the universal ribosomal protein uL15 family. As to quaternary structure, part of the 50S ribosomal subunit.

Functionally, binds to the 23S rRNA. This chain is Large ribosomal subunit protein uL15, found in Rhodococcus jostii (strain RHA1).